A 334-amino-acid chain; its full sequence is G-protein coupled receptor 12 (334 aa).

The Extracellular portion of the chain corresponds to 1–48 (MNEDLKVNLSGLPRDYLDAAAAENISAAVSSRVPAVEPEPELVVNPWD). Residues Asn-8 and Asn-24 are each glycosylated (N-linked (GlcNAc...) asparagine). A helical membrane pass occupies residues 49 to 69 (IVLCTSGTLISCENAIVVLII). Over 70 to 77 (FHNPSLRA) the chain is Cytoplasmic. Residues 78–98 (PMFLLIGSLALADLLAGIGLI) form a helical membrane-spanning segment. Over 99-113 (TNFVFAYLLQSEATK) the chain is Extracellular. The helical transmembrane segment at 114–134 (LVTIGLIVASFSASVCSLLAI) threads the bilayer. The Cytoplasmic segment spans residues 135–158 (TVDRYLSLYYALTYHSERTVTFTY). The chain crosses the membrane as a helical span at residues 159-179 (VMLVMLWGTSICLGLLPVMGW). The Extracellular portion of the chain corresponds to 180–199 (NCLRDESTCSVVRPLTKNNA). Residues 200-220 (AILSVSFLFMFALMLQLYIQI) form a helical membrane-spanning segment. The Cytoplasmic portion of the chain corresponds to 221-252 (CKIVMRHAHQIALQHHFLATSHYVTTRKGVST). A helical transmembrane segment spans residues 253–273 (LAIILGTFAACWMPFTLYSLI). Over 274–282 (ADYTYPSIY) the chain is Extracellular. Residues 283-303 (TYATLLPATYNSIINPVIYAF) form a helical membrane-spanning segment. The Cytoplasmic segment spans residues 304-334 (RNQEIQKALCLICCGCIPSSLAQRARSPSDV). Residue Cys-317 is the site of S-palmitoyl cysteine attachment. 2 positions are modified to phosphoserine: Ser-330 and Ser-332.

It belongs to the G-protein coupled receptor 1 family.

It localises to the cell membrane. Functionally, promotes neurite outgrowth and blocks myelin inhibition in neurons. Receptor with constitutive G(s) signaling activity that stimulates cyclic AMP production. The protein is G-protein coupled receptor 12 (GPR12) of Homo sapiens (Human).